A 171-amino-acid polypeptide reads, in one-letter code: Dual specificity protein phosphatase OPG106 (171 aa).

Positions 1–27 are dimerization; it reads MDKKSLYKYLLLRSTGDMHKAKSPTIM. Residues 23–171 form the Tyrosine-protein phosphatase domain; sequence SPTIMTRVTN…IIEKYVIDKN (149 aa). The Phosphocysteine intermediate role is filled by Cys110.

It belongs to the protein-tyrosine phosphatase family. Non-receptor class dual specificity subfamily. As to quaternary structure, homodimer.

It is found in the virion. The protein localises to the host cytoplasm. The enzyme catalyses O-phospho-L-tyrosyl-[protein] + H2O = L-tyrosyl-[protein] + phosphate. It catalyses the reaction O-phospho-L-seryl-[protein] + H2O = L-seryl-[protein] + phosphate. Serine/tyrosine phosphatase which down-regulates cellular antiviral response by dephosphorylating activated host STAT1 and blocking interferon (IFN)-stimulated innate immune responses. Dephosphorylates the OPG144 protein. This chain is Dual specificity protein phosphatase OPG106 (OPG106), found in Bos taurus (Bovine).